Consider the following 1198-residue polypeptide: Potassium/sodium hyperpolarization-activated cyclic nucleotide-gated channel 4 (1198 aa).

Residues 1–266 (MDKLPPSMRK…PYSDFRFYWD (266 aa)) lie on the Cytoplasmic side of the membrane. The segment at 25-183 (IMDEEEDGEE…PASASCEQPS (159 aa)) is disordered. A compositionally biased stretch (acidic residues) spans 26-36 (MDEEEDGEEEG). Residues 105–118 (SRGGGSGGAGGGSS) are compositionally biased toward gly residues. A compositionally biased stretch (basic and acidic residues) spans 121 to 132 (HLHDSAEERRLI). At S139 the chain carries Phosphoserine. Pro residues predominate over residues 164–174 (ASPPPQQPPQP). The segment at 209 to 260 (GQSGFMQRQFGAMLQPGVNKFSLRMFGSQKAVEREQERVKSAGFWIIHPYSD) is involved in subunit assembly. The helical transmembrane segment at 267–287 (LTMLLLMVGNLIIIPVGITFF) threads the bilayer. The Extracellular portion of the chain corresponds to 288-293 (KDENTT). Residues 294-314 (PWIVFNVVSDTFFLIDLVLNF) form a helical membrane-spanning segment. Residues 315-340 (RTGIVVEDNTEIILDPQRIKMKYLKS) lie on the Cytoplasmic side of the membrane. The chain crosses the membrane as a helical span at residues 341–361 (WFVVDFISSIPVDYIFLIVET). Over 362-368 (RIDSEVY) the chain is Extracellular. The helical; Voltage-sensor transmembrane segment at 369–389 (KTARALRIVRFTKILSLLRLL) threads the bilayer. Residues 390–420 (RLSRLIRYIHQWEEIFHMTYDLASAVVRIVN) are Cytoplasmic-facing. The helical transmembrane segment at 421–441 (LIGMMLLLCHWDGCLQFLVPM) threads the bilayer. Residues 442–464 (LQDFPHDCWVSINGMVNNSWGKQ) are Extracellular-facing. An N-linked (GlcNAc...) asparagine glycan is attached at N458. The segment at residues 465–486 (YSYALFKAMSHMLCIGYGRQAP) is an intramembrane region (pore-forming). At 487–496 (VGMSDVWLTM) the chain is on the extracellular side. A helical transmembrane segment spans residues 497-517 (LSMIVGATCYAMFIGHATALI). Over 518-1198 (QSLDSSRRQY…PVRSKLPSNL (681 aa)) the chain is Cytoplasmic. Y559, K562, F564, and E566 together coordinate 3',5'-cyclic GMP. 3',5'-cyclic AMP is bound by residues G659, E660, C662, R669, T670, V673, and R710. The segment at 804–1198 (AIFRPPPGPG…PVRSKLPSNL (395 aa)) is disordered. 2 stretches are compositionally biased toward low complexity: residues 831 to 856 (SLIP…SSSS) and 866 to 880 (SAPP…SSSS). Over residues 881-894 (SPPPGACSSPPAPT) the composition is skewed to pro residues. Composition is skewed to low complexity over residues 895–905 (PSTSTAATTTG), 913–937 (LGGS…SPQA), and 965–985 (RSPS…SPGL). Positions 1027 to 1040 (GHSPGPPRTFPSAP) are enriched in pro residues. The span at 1043 to 1054 (ASGSHGSLLLPP) shows a compositional bias: low complexity. Residues S1103 and S1106 each carry the phosphoserine modification. The segment covering 1120-1132 (AGGGSGSSGGLGP) has biased composition (gly residues).

The protein belongs to the potassium channel HCN family. In terms of assembly, homotetramer. The potassium channel is composed of a homo- or heterotetrameric complex of pore-forming subunits. Interacts with PEX5L with a 4:4 HCN4:PEX5L stoichiometry; reduces the effects of cAMP on the voltage-dependence and rate of activation. Interacts with IRAG1; regulates HCN4 channel activity. Interacts with IRAG2; regulates HCN4 channel activity. S-palmitoylated. In terms of tissue distribution, highly expressed in pyramidal and granule layer of the hippocampus, in thalamus anterior nucleus, in the supraoptic nucleus in hypothalamus, in cerebellum, and in trapezoid nuclei and superior olivary complex in the auditory system. Detected in a subset of elongated cells in taste buds.

It localises to the cell membrane. The catalysed reaction is K(+)(in) = K(+)(out). It catalyses the reaction Na(+)(in) = Na(+)(out). Its activity is regulated as follows. Activated by cAMP and at 100 times higher concentrationsand to a lesser extent by cGMP and cCMP. cAMP binding causes a conformation change that leads to the assembly of an active tetramer and channel opening. Binding of cAMP removes a tonic inhibition conferred by cyclic nucleotide-binding domain (CNBD) on channel opening. Cyclic dinucleotides can modulate HCN4 channel; cyclic dinucleotides acting as potent antagonists of cAMP. Inhibited by extracellular Cs(+) ions. Auxiliary subunits can also regulate HCN4 channel. IRAG1 causes a gain-of-function by shifting HCN4 activation to more depolarized membrane potentials in the absence of cAMP. In contrast, IRAG2 causes a loss-of-function by inhibiting cAMP-dependent potentiation of HCN4 activation. In terms of biological role, hyperpolarization-activated ion channel that are permeable to Na(+) and K(+) ions with very slow activation and inactivation. Exhibits higher selectivity for K(+) over Na(+) ions. Contributes to the native pacemaker currents in heart (If) that regulate the rhythm of heart beat. Contributes to the native pacemaker currents in neurons (Ih). May mediate responses to sour stimuli. The chain is Potassium/sodium hyperpolarization-activated cyclic nucleotide-gated channel 4 (Hcn4) from Rattus norvegicus (Rat).